The following is a 606-amino-acid chain: uncharacterized protein (606 aa).

This is an uncharacterized protein from Sinorhizobium fredii (strain NBRC 101917 / NGR234).